The following is a 257-amino-acid chain: UPF0246 protein RSc2009 (257 aa).

It belongs to the UPF0246 family.

The polypeptide is UPF0246 protein RSc2009 (Ralstonia nicotianae (strain ATCC BAA-1114 / GMI1000) (Ralstonia solanacearum)).